The chain runs to 197 residues: Probable nicotinate-nucleotide adenylyltransferase (197 aa).

The protein belongs to the NadD family.

It catalyses the reaction nicotinate beta-D-ribonucleotide + ATP + H(+) = deamido-NAD(+) + diphosphate. The protein operates within cofactor biosynthesis; NAD(+) biosynthesis; deamido-NAD(+) from nicotinate D-ribonucleotide: step 1/1. Its function is as follows. Catalyzes the reversible adenylation of nicotinate mononucleotide (NaMN) to nicotinic acid adenine dinucleotide (NaAD). The protein is Probable nicotinate-nucleotide adenylyltransferase of Bordetella avium (strain 197N).